Reading from the N-terminus, the 345-residue chain is Histidinol-phosphate aminotransferase (345 aa).

At lysine 206 the chain carries N6-(pyridoxal phosphate)lysine.

Belongs to the class-II pyridoxal-phosphate-dependent aminotransferase family. Histidinol-phosphate aminotransferase subfamily. In terms of assembly, homodimer. The cofactor is pyridoxal 5'-phosphate.

The enzyme catalyses L-histidinol phosphate + 2-oxoglutarate = 3-(imidazol-4-yl)-2-oxopropyl phosphate + L-glutamate. Its pathway is amino-acid biosynthesis; L-histidine biosynthesis; L-histidine from 5-phospho-alpha-D-ribose 1-diphosphate: step 7/9. In Bacteroides fragilis (strain ATCC 25285 / DSM 2151 / CCUG 4856 / JCM 11019 / LMG 10263 / NCTC 9343 / Onslow / VPI 2553 / EN-2), this protein is Histidinol-phosphate aminotransferase.